A 209-amino-acid chain; its full sequence is Glycolipid transfer protein B (209 aa).

Repeat copies occupy residues 45–55 (IKADITGNITK) and 56–66 (IRSVYESNPTQ). The tract at residues 45–66 (IKADITGNITKIRSVYESNPTQ) is 2 X 12 AA approximate tandem repeats. A beta-D-galactosyl-(1-&gt;4)-beta-D-glucosyl-(1&lt;-&gt;1)-N-[(9Z)-octadecenoyl]-sphing-4-enine-binding site is contributed by 48-55 (DITGNITK). Beta-D-galactosyl-(1-&gt;4)-beta-D-glucosyl-(1&lt;-&gt;1)-N-[(9Z)-octadecenoyl]-sphing-4-enine is bound by residues histidine 140 and tyrosine 207.

Belongs to the GLTP family.

Its subcellular location is the cytoplasm. Accelerates the intermembrane transfer of various glycolipids. Catalyzes the transfer of various glycosphingolipids between membranes but does not catalyze the transfer of phospholipids. May be involved in the intracellular translocation of glucosylceramides. This is Glycolipid transfer protein B (gltp-b) from Xenopus laevis (African clawed frog).